The primary structure comprises 248 residues: Homeobox protein Hox-A4 (248 aa).

The interval 23-107 is disordered; that stretch reads YQQSGYIPNP…PDGGAGANAS (85 aa). Basic and acidic residues predominate over residues 35–51; the sequence is YYERPKDTGFPHHDEPS. Residues 128 to 133 carry the Antp-type hexapeptide motif; sequence VYPWMK. A DNA-binding region (homeobox) is located at residues 149 to 208; that stretch reads PKRSRTAYTRQQALELEKEFHFNRYLTRRRRVEIAHTMCLSERQVKIWFQNRRMKWKKEH. The tract at residues 207–248 is disordered; the sequence is EHKLPNTKIRSSSSASSSASGAQQQQIKTGQQLVPTPCTAGL. Residues 217 to 238 show a composition bias toward low complexity; that stretch reads SSSSASSSASGAQQQQIKTGQQ.

It belongs to the Antp homeobox family. Deformed subfamily.

The protein resides in the nucleus. In terms of biological role, sequence-specific transcription factor which is part of a developmental regulatory system that provides cells with specific positional identities on the anterior-posterior axis. The chain is Homeobox protein Hox-A4 (hoxa4) from Morone saxatilis (Striped bass).